The primary structure comprises 151 residues: Large ribosomal subunit protein bL9 (151 aa).

The protein belongs to the bacterial ribosomal protein bL9 family.

Functionally, binds to the 23S rRNA. In Prochlorococcus marinus (strain MIT 9301), this protein is Large ribosomal subunit protein bL9.